Here is a 121-residue protein sequence, read N- to C-terminus: Small ribosomal subunit protein uS13 (121 aa).

The tract at residues R89–K121 is disordered. Residues Q100 to K121 are compositionally biased toward basic residues.

Belongs to the universal ribosomal protein uS13 family. Part of the 30S ribosomal subunit. Forms a loose heterodimer with protein S19. Forms two bridges to the 50S subunit in the 70S ribosome.

Its function is as follows. Located at the top of the head of the 30S subunit, it contacts several helices of the 16S rRNA. In the 70S ribosome it contacts the 23S rRNA (bridge B1a) and protein L5 of the 50S subunit (bridge B1b), connecting the 2 subunits; these bridges are implicated in subunit movement. Contacts the tRNAs in the A and P-sites. The protein is Small ribosomal subunit protein uS13 of Prochlorococcus marinus subsp. pastoris (strain CCMP1986 / NIES-2087 / MED4).